Consider the following 185-residue polypeptide: Ribosome-recycling factor (185 aa).

This sequence belongs to the RRF family.

Its subcellular location is the cytoplasm. Functionally, responsible for the release of ribosomes from messenger RNA at the termination of protein biosynthesis. May increase the efficiency of translation by recycling ribosomes from one round of translation to another. The protein is Ribosome-recycling factor of Legionella pneumophila (strain Corby).